Here is a 267-residue protein sequence, read N- to C-terminus: MAEEMRQELSALAAIFCGPHEWEMLSCSETDGAVFRIHTTAEGLAGEDVPLELAFHLPAGYPSCLPGISVNSERLTRAQCVTVKEKLLGEARRLLSEPMVHELVLWTQQNLRHILSQTETESSNGTCTLPESSTVDGGLWMTLLRLDHMRARTKYVKVVEKWASELRLTGRLMFMGKMILILLQGDRSNIKEYLILQKTSKVDVDSSGKKCKEKMISVLSETKVQTEHKRFLAFEVKEYSTLEELQKEFETAGLQELFSECVLGLVK.

Residues 7 to 114 form the RWD domain; that stretch reads QELSALAAIF…LWTQQNLRHI (108 aa). Interaction with UBE2I/UBC9 regions lie at residues 13 to 15 and 100 to 102; these read AAI and VHE.

Interacts with UBE2I/UBC9, NFKBIA, HIF1A and NCOA2.

It is found in the nucleus. It localises to the cytoplasm. Functionally, enhancer of SUMO conjugation. Via its interaction with UBE2I/UBC9, increases SUMO conjugation to proteins by promoting the binding of E1 and E2 enzymes, thioester linkage between SUMO and UBE2I/UBC9 and transfer of SUMO to specific target proteins which include HIF1A, PIAS, NFKBIA, NR3C1 and TOP1. Positively regulates the NF-kappa-B signaling pathway by enhancing the sumoylation of NF-kappa-B inhibitor alpha (NFKBIA), promoting its stabilization which consequently leads to an increased inhibition of NF-kappa-B transcriptional activity. Negatively regulates the hypoxia-inducible factor-1 alpha (HIF1A) signaling pathway by increasing the sumoylation of HIF1A, promoting its stabilization, transcriptional activity and the expression of its target gene VEGFA during hypoxia. Has no effect on ubiquitination. In Rattus norvegicus (Rat), this protein is RWD domain-containing protein 3 (Rwdd3).